The primary structure comprises 190 residues: Protein shisa-like-2A (190 aa).

The next 2 membrane-spanning stretches (helical) occupy residues 48-68 and 70-90; these read SFFP…LIGL and VAAV…YLFI.

It belongs to the shisa family.

The protein resides in the membrane. The sequence is that of Protein shisa-like-2A from Homo sapiens (Human).